The sequence spans 331 residues: Nucleotide sugar transporter SLC35B4 (331 aa).

11 helical membrane passes run 4 to 24, 30 to 50, 59 to 79, 92 to 112, 117 to 137, 153 to 173, 201 to 221, 229 to 249, 251 to 267, 268 to 288, and 291 to 311; these read ALAVGLVFAGCCSNVIFLELL, GCGNIVTFAQFLFIAVEGFLF, PAIPIRYYAIMVTMFFTVSVV, LHMIFRSGSLIANMILGIIIL, SIFKYTSIALVSVGIFICTFM, GFQAFVWWLLGIGALTFALLM, ALPLPGFVFLASDIYDHAVLF, IPVIGVTLPIMWFYLLMNIIT, YVCIRGVFILTTECASL, TVTLVVTLRKFVSLIFSILYF, and PFTLWHWLGTLFVFIGTLMYT. Positions 326–331 match the Mediates endoplasmic reticulum retention motif; sequence KDSKKN.

This sequence belongs to the nucleotide-sugar transporter family. SLC35B subfamily.

The protein localises to the endoplasmic reticulum membrane. It catalyses the reaction UDP-N-acetyl-alpha-D-glucosamine(in) + UDP-alpha-D-glucuronate(out) = UDP-N-acetyl-alpha-D-glucosamine(out) + UDP-alpha-D-glucuronate(in). The enzyme catalyses UDP-alpha-D-xylose(in) + UDP-alpha-D-glucuronate(out) = UDP-alpha-D-xylose(out) + UDP-alpha-D-glucuronate(in). Antiporter that transports nucleotide sugars across the endoplasmic reticulum (ER) membrane in exchange for another nucleotide sugar. May couple UDP-alpha-D-glucuronate (UDP-GlcA) or UDP-alpha-D-xylose (UDP-Xyl) efflux to UDP-alpha-D-glucuronate (UDP-GlcA) influx into the ER lumen, which in turn stimulates glucuronidation and excretion of endobiotics and xenobiotics. The polypeptide is Nucleotide sugar transporter SLC35B4 (SLC35B4) (Pongo abelii (Sumatran orangutan)).